We begin with the raw amino-acid sequence, 194 residues long: Phosphoheptose isomerase (194 aa).

In terms of domain architecture, SIS spans 37–194; sequence ISNSFKQGGK…LIEFEMAKQA (158 aa). 52 to 54 is a binding site for substrate; the sequence is NGG. Residues histidine 61 and glutamate 65 each contribute to the Zn(2+) site. Residues glutamate 65, 93 to 94, 119 to 121, serine 124, and glutamine 172 contribute to the substrate site; these read ND and STS. The Zn(2+) site is built by glutamine 172 and histidine 180.

The protein belongs to the SIS family. GmhA subfamily. Homotetramer. Zn(2+) serves as cofactor.

The protein localises to the cytoplasm. The catalysed reaction is 2 D-sedoheptulose 7-phosphate = D-glycero-alpha-D-manno-heptose 7-phosphate + D-glycero-beta-D-manno-heptose 7-phosphate. The protein operates within carbohydrate biosynthesis; D-glycero-D-manno-heptose 7-phosphate biosynthesis; D-glycero-alpha-D-manno-heptose 7-phosphate and D-glycero-beta-D-manno-heptose 7-phosphate from sedoheptulose 7-phosphate: step 1/1. Catalyzes the isomerization of sedoheptulose 7-phosphate in D-glycero-D-manno-heptose 7-phosphate. The sequence is that of Phosphoheptose isomerase from Haemophilus influenzae (strain 86-028NP).